The sequence spans 192 residues: Ion-translocating oxidoreductase complex subunit B (192 aa).

Positions Met1–Ser26 are hydrophobic. One can recognise a 4Fe-4S domain in the interval Glu32–Val91. The [4Fe-4S] cluster site is built by Cys49, Cys52, Cys57, Cys74, Cys117, Cys120, Cys123, Cys127, Cys147, Cys150, Cys153, and Cys157. 2 4Fe-4S ferredoxin-type domains span residues Gln108–Lys137 and Ala138–Ile167.

The protein belongs to the 4Fe4S bacterial-type ferredoxin family. RnfB subfamily. As to quaternary structure, the complex is composed of six subunits: RnfA, RnfB, RnfC, RnfD, RnfE and RnfG. Requires [4Fe-4S] cluster as cofactor.

The protein localises to the cell inner membrane. Functionally, part of a membrane-bound complex that couples electron transfer with translocation of ions across the membrane. The protein is Ion-translocating oxidoreductase complex subunit B of Pectobacterium carotovorum subsp. carotovorum (strain PC1).